The following is a 610-amino-acid chain: Replication factor C large subunit (610 aa).

Residue 55 to 62 (GPAGIGKT) participates in ATP binding. 3 stretches are compositionally biased toward basic and acidic residues: residues 467-478 (EKEGNASAEKPE), 502-515 (LPEK…KLPE), and 594-603 (DGSKKAEPKN). The disordered stretch occupies residues 467 to 610 (EKEGNASAEK…PKNQKTLFDF (144 aa)).

It belongs to the activator 1 small subunits family. RfcL subfamily. Heteromultimer composed of small subunits (RfcS) and large subunits (RfcL).

Functionally, part of the RFC clamp loader complex which loads the PCNA sliding clamp onto DNA. The protein is Replication factor C large subunit of Methanosarcina mazei (strain ATCC BAA-159 / DSM 3647 / Goe1 / Go1 / JCM 11833 / OCM 88) (Methanosarcina frisia).